A 231-amino-acid chain; its full sequence is Tol-Pal system protein TolQ (231 aa).

3 helical membrane-spanning segments follow: residues 20 to 40, 134 to 154, and 176 to 196; these read IVVQ…WIMI, FLAT…VWGI, and IAEA…AVIA.

This sequence belongs to the ExbB/TolQ family. As to quaternary structure, the Tol-Pal system is composed of five core proteins: the inner membrane proteins TolA, TolQ and TolR, the periplasmic protein TolB and the outer membrane protein Pal. They form a network linking the inner and outer membranes and the peptidoglycan layer.

Its subcellular location is the cell inner membrane. Its function is as follows. Part of the Tol-Pal system, which plays a role in outer membrane invagination during cell division and is important for maintaining outer membrane integrity. The polypeptide is Tol-Pal system protein TolQ (Pseudomonas aeruginosa (strain ATCC 15692 / DSM 22644 / CIP 104116 / JCM 14847 / LMG 12228 / 1C / PRS 101 / PAO1)).